We begin with the raw amino-acid sequence, 134 residues long: MSWQTYVDDHLMCDIEGHEGHRLTAAAIVGHDGSVWAQSATFPQFKPEEMNGIMTDFNEPGHLAPTGLHLGGTKYMVIQGEAGAVIRGKKGSGGITIKKTGQALVCGIYEEPVTPGQCNMVVERLGDYLLEQGL.

An intrachain disulfide couples Cys-13 to Cys-118. The short motif at 84–100 is the Involved in PIP2 interaction element; the sequence is AVIRGKKGSGGITIKKT. Thr-114 carries the phosphothreonine modification.

The protein belongs to the profilin family. Occurs in many kinds of cells as a complex with monomeric actin in a 1:1 ratio. Post-translationally, phosphorylated by MAP kinases.

It is found in the cytoplasm. The protein localises to the cytoskeleton. In terms of biological role, binds to actin and affects the structure of the cytoskeleton. At high concentrations, profilin prevents the polymerization of actin, whereas it enhances it at low concentrations. This chain is Profilin-3, found in Olea europaea (Common olive).